The following is a 478-amino-acid chain: Zinc metalloproteinase/disintegrin (478 aa).

The first 20 residues, 1 to 20 (MIEVLLVTICLAAFPYQGSS), serve as a signal peptide directing secretion. The propeptide occupies 21–187 (IILESGNVND…PIKKASQSNL (167 aa)). 3 cysteine pairs are disulfide-bonded: C304–C384, C344–C368, and C346–C351. H329 is a binding site for Zn(2+). Residue E330 is part of the active site. Zn(2+) contacts are provided by H333 and H339. The propeptide occupies 390–405 (LRTDTVSTPVSGNELL). The Disintegrin domain maps to 397–478 (TPVSGNELLE…AGCPRNPFHA (82 aa)). Disulfide bonds link C411/C426, C413/C421, C420/C443, C434/C440, C439/C464, and C452/C471. The Cell attachment site signature appears at 456–458 (RGD).

The protein belongs to the venom metalloproteinase (M12B) family. P-II subfamily. P-IIa sub-subfamily. In terms of assembly, monomer. In terms of tissue distribution, expressed by the venom gland.

The protein localises to the secreted. Functionally, binds alpha-5/beta-1 (ITGAV/ITGB1), alpha-V/beta-3 (ITGAV/ITGB3) and alpha-M/beta-2 (ITGAM/ITGB2) integrins. Is a potent inhibitor of platelet aggregation induced by ADP, collagen, and thrombin. Induces neutrophil chemotaxis and inhibits the chemotaxis of human neutrophils toward fMLP, IL-8, and jarastatin itself. Directly activates an integrin-coupled signaling and modulate the MAPK pathway in different ways, leading the neutrophils to express different functional response. Induces Erk-2 translocation to nucleus and a delay of the spontaneous apoptosis of neutrophils. Increases the IL-8 mRNA levels in neutrophils. When injected simultaneously with melanoma cells in mice, jarastatin, flavoridin (FL) and kistrin (KR) significantly reduce tumor lung colonization. Inhibits mouse melanoma B16F10 cell growth in vitro. When it interacts with melanoma cells, it induces actin cytoskeleton rearrangement, increasing actin polymerization and PTK2/FAK1 phosphorylation. Interferes with NF-kappaB translocation in melanoma cells. The polypeptide is Zinc metalloproteinase/disintegrin (Bothrops jararaca (Jararaca)).